Here is a 102-residue protein sequence, read N- to C-terminus: Acid shock protein (102 aa).

Positions 1–21 are cleaved as a signal peptide; that stretch reads MKKVLALVVAAAMGLSSAAFA. Positions 22 to 41 are enriched in low complexity; it reads AETATTPAPTATTTKAAPAK. A propeptide spanning residues 22–58 is cleaved from the precursor; the sequence is AETATTPAPTATTTKAAPAKTTHHKKQHKAAPAQKAQ. The segment at 22–102 is disordered; the sequence is AETATTPAPT…PAKPAAQPAA (81 aa). Basic residues predominate over residues 80 to 90; the sequence is AAKKHAGKHSH. Over residues 91–102 the composition is skewed to low complexity; it reads QQPAKPAAQPAA.

The protein belongs to the Asr family. Proteolytic processing gives rise to the active protein.

It is found in the periplasm. Its function is as follows. Required for growth and/or survival at acidic conditions. This Escherichia coli (strain 55989 / EAEC) protein is Acid shock protein.